Here is a 333-residue protein sequence, read N- to C-terminus: GTPase Obg (333 aa).

The 158-residue stretch at methionine 1–leucine 158 folds into the Obg domain. Residues histidine 121–alanine 143 form a disordered region. The region spanning alanine 159–glutamine 323 is the OBG-type G domain. Residues glycine 165–serine 172, phenylalanine 190–glutamate 194, aspartate 212–glycine 215, serine 279–aspartate 282, and serine 304–valine 306 contribute to the GTP site. Serine 172 and threonine 192 together coordinate Mg(2+).

It belongs to the TRAFAC class OBG-HflX-like GTPase superfamily. OBG GTPase family. In terms of assembly, monomer. Mg(2+) serves as cofactor.

The protein localises to the cytoplasm. An essential GTPase which binds GTP, GDP and possibly (p)ppGpp with moderate affinity, with high nucleotide exchange rates and a fairly low GTP hydrolysis rate. Plays a role in control of the cell cycle, stress response, ribosome biogenesis and in those bacteria that undergo differentiation, in morphogenesis control. This is GTPase Obg from Chloroherpeton thalassium (strain ATCC 35110 / GB-78).